The chain runs to 170 residues: Myosin regulatory light chain 1 (170 aa).

Residues 1–13 are compositionally biased toward basic residues; that stretch reads MSKAAKKKSSKKR. Residues 1-22 form a disordered region; that stretch reads MSKAAKKKSSKKRSGSEAAQFD. EF-hand domains are found at residues 24–59 and 93–128; these read KTIQ…MGQI and DPEA…KRGE. Residues Asp-37, Asn-39, Asp-41, and Asp-48 each contribute to the Ca(2+) site.

In terms of assembly, myosin is a hexamer of 2 heavy chains and 4 light chains (two regulatory light chains and two essential light chains).

The protein is Myosin regulatory light chain 1 (mlc-1) of Caenorhabditis elegans.